Here is an 81-residue protein sequence, read N- to C-terminus: Photosystem I iron-sulfur center (81 aa).

2 consecutive 4Fe-4S ferredoxin-type domains span residues 2 to 31 and 39 to 68; these read SHSV…MVPW and IASA…VRVY. 8 residues coordinate [4Fe-4S] cluster: Cys11, Cys14, Cys17, Cys21, Cys48, Cys51, Cys54, and Cys58.

In terms of assembly, the eukaryotic PSI reaction center is composed of at least 11 subunits. Requires [4Fe-4S] cluster as cofactor.

The protein resides in the plastid. Its subcellular location is the chloroplast thylakoid membrane. It catalyses the reaction reduced [plastocyanin] + hnu + oxidized [2Fe-2S]-[ferredoxin] = oxidized [plastocyanin] + reduced [2Fe-2S]-[ferredoxin]. Functionally, apoprotein for the two 4Fe-4S centers FA and FB of photosystem I (PSI); essential for photochemical activity. FB is the terminal electron acceptor of PSI, donating electrons to ferredoxin. The C-terminus interacts with PsaA/B/D and helps assemble the protein into the PSI complex. Required for binding of PsaD and PsaE to PSI. PSI is a plastocyanin/cytochrome c6-ferredoxin oxidoreductase, converting photonic excitation into a charge separation, which transfers an electron from the donor P700 chlorophyll pair to the spectroscopically characterized acceptors A0, A1, FX, FA and FB in turn. This Nephroselmis olivacea (Green alga) protein is Photosystem I iron-sulfur center.